The following is a 642-amino-acid chain: Fimbrin (642 aa).

2 consecutive EF-hand domains span residues E16–D50 and A51–S86. The Ca(2+) site is built by D29, D31, W35, D66, S68, R70, and D75. 2 actin-binding regions span residues I125–P394 and I395–K642. 4 consecutive Calponin-homology (CH) domains span residues E139 to L259, L287 to P390, E411 to I521, and D534 to K642.

In terms of biological role, binds to actin, and functionally associates with actin structures involved in the development and maintenance of cell polarity. This chain is Fimbrin (SAC6), found in Saccharomyces cerevisiae (strain ATCC 204508 / S288c) (Baker's yeast).